A 270-amino-acid polypeptide reads, in one-letter code: Formamidopyrimidine-DNA glycosylase (270 aa).

Pro2 (schiff-base intermediate with DNA) is an active-site residue. The active-site Proton donor is the Glu3. The active-site Proton donor; for beta-elimination activity is the Lys58. His90, Arg109, and Arg152 together coordinate DNA. The FPG-type zinc finger occupies Arg237–Lys270. Arg260 serves as the catalytic Proton donor; for delta-elimination activity.

The protein belongs to the FPG family. Monomer. Zn(2+) is required as a cofactor.

It carries out the reaction Hydrolysis of DNA containing ring-opened 7-methylguanine residues, releasing 2,6-diamino-4-hydroxy-5-(N-methyl)formamidopyrimidine.. It catalyses the reaction 2'-deoxyribonucleotide-(2'-deoxyribose 5'-phosphate)-2'-deoxyribonucleotide-DNA = a 3'-end 2'-deoxyribonucleotide-(2,3-dehydro-2,3-deoxyribose 5'-phosphate)-DNA + a 5'-end 5'-phospho-2'-deoxyribonucleoside-DNA + H(+). In terms of biological role, involved in base excision repair of DNA damaged by oxidation or by mutagenic agents. Acts as a DNA glycosylase that recognizes and removes damaged bases. Has a preference for oxidized purines, such as 7,8-dihydro-8-oxoguanine (8-oxoG). Has AP (apurinic/apyrimidinic) lyase activity and introduces nicks in the DNA strand. Cleaves the DNA backbone by beta-delta elimination to generate a single-strand break at the site of the removed base with both 3'- and 5'-phosphates. In Rhizorhabdus wittichii (strain DSM 6014 / CCUG 31198 / JCM 15750 / NBRC 105917 / EY 4224 / RW1) (Sphingomonas wittichii), this protein is Formamidopyrimidine-DNA glycosylase.